The chain runs to 490 residues: Aspartyl/glutamyl-tRNA(Asn/Gln) amidotransferase subunit B (490 aa).

The protein belongs to the GatB/GatE family. GatB subfamily. As to quaternary structure, heterotrimer of A, B and C subunits.

The enzyme catalyses L-glutamyl-tRNA(Gln) + L-glutamine + ATP + H2O = L-glutaminyl-tRNA(Gln) + L-glutamate + ADP + phosphate + H(+). The catalysed reaction is L-aspartyl-tRNA(Asn) + L-glutamine + ATP + H2O = L-asparaginyl-tRNA(Asn) + L-glutamate + ADP + phosphate + 2 H(+). Its function is as follows. Allows the formation of correctly charged Asn-tRNA(Asn) or Gln-tRNA(Gln) through the transamidation of misacylated Asp-tRNA(Asn) or Glu-tRNA(Gln) in organisms which lack either or both of asparaginyl-tRNA or glutaminyl-tRNA synthetases. The reaction takes place in the presence of glutamine and ATP through an activated phospho-Asp-tRNA(Asn) or phospho-Glu-tRNA(Gln). This Methylobacterium radiotolerans (strain ATCC 27329 / DSM 1819 / JCM 2831 / NBRC 15690 / NCIMB 10815 / 0-1) protein is Aspartyl/glutamyl-tRNA(Asn/Gln) amidotransferase subunit B.